Reading from the N-terminus, the 301-residue chain is CPX chromosomal region candidate gene 1 protein (301 aa).

The disordered stretch occupies residues 1-77 (MSYPTKEGSD…ENSELETEIQ (77 aa)). Positions 44-60 (VETNPINREPGTATSQE) are enriched in polar residues.

Expressed in a variety of fetal tissues.

This Homo sapiens (Human) protein is CPX chromosomal region candidate gene 1 protein (CPXCR1).